A 150-amino-acid polypeptide reads, in one-letter code: MKRNRMEMEFTSCSENEAFARIAVAAFVAQLDPTLEELTDIKTVVSEAVTNAVIHAYGECSEGMMVRVSVEIEDTQVAITVTDRGVGIVDVEQARQPLYTSRPEWERAGMGFSIMEHFMDQVRVRSTPGQGTVVHMIKKLQASRNVAVVN.

The protein belongs to the anti-sigma-factor family.

It carries out the reaction L-seryl-[protein] + ATP = O-phospho-L-seryl-[protein] + ADP + H(+). The enzyme catalyses L-threonyl-[protein] + ATP = O-phospho-L-threonyl-[protein] + ADP + H(+). Binds to sigma F and blocks its ability to form an RNA polymerase holoenzyme (E-sigma F). Phosphorylates SpoIIAA on a serine residue. This phosphorylation may enable SpoIIAA to act as an anti-anti-sigma factor that counteracts SpoIIAB and thus releases sigma F from inhibition. This chain is Anti-sigma F factor, found in Pasteuria penetrans.